We begin with the raw amino-acid sequence, 330 residues long: Free fatty acid receptor 2 (330 aa).

Residues 1–8 (MTPDWHSS) are Extracellular-facing. The chain crosses the membrane as a helical span at residues 9–29 (LILTAYILIFLTGLPANLLAL). At 30–43 (RAFVSRVRQPQPAP) the chain is on the cytoplasmic side. Residues 44–64 (VHILLLNLTLADLLLLLLLPF) traverse the membrane as a helical segment. Residues 65–79 (RIVEAASNFRWYLPK) are Extracellular-facing. Residues 80–100 (IVCALTGFGFYSSIYCSTWLL) form a helical membrane-spanning segment. Residues 101-126 (AGISIERYLGVAFPVQYKLSRRPLYG) lie on the Cytoplasmic side of the membrane. A helical membrane pass occupies residues 127 to 147 (VIAALVAWIMSFGHCTIVIIV). Residues 148–184 (QYLNSTEQVGTENQITCYENFTQAQLDVVLPVRLELC) lie on the Extracellular side of the membrane. N-linked (GlcNAc...) asparagine glycans are attached at residues asparagine 151 and asparagine 167. The chain crosses the membrane as a helical span at residues 185-205 (LVLFFVPMTVTIFCYWRFVWI). Over 206–219 (MLTQPHVGAQRRRR) the chain is Cytoplasmic. The helical transmembrane segment at 220 to 240 (AVGLAVVTLLNFLVCFGPYNM) threads the bilayer. The Extracellular portion of the chain corresponds to 241-255 (SHLVGFHLRQSPSWR). Residues 256–276 (VEAVVFSSLNASLDPLLFYFS) traverse the membrane as a helical segment. The Cytoplasmic segment spans residues 277 to 330 (SSVVRRAFGKGLLLLRNPGSSMLGRGAEETVEGTKTDRGGSQTEGAQSSDFVTE). A disordered region spans residues 300 to 330 (GRGAEETVEGTKTDRGGSQTEGAQSSDFVTE). Positions 302-314 (GAEETVEGTKTDR) are enriched in basic and acidic residues. Polar residues predominate over residues 315–330 (GGSQTEGAQSSDFVTE).

It belongs to the G-protein coupled receptor 1 family. In terms of assembly, interacts with FCN1 (via Fibrinogen C-terminal domain). As to expression, detected in whole wall and separated mucosa in the distal ileum and colon. Expressed by enteroendocrine cells expressing peptide YY (PYY) (at protein level).

It is found in the cell membrane. Functionally, g protein-coupled receptor that is activated by a major product of dietary fiber digestion, the short chain fatty acids (SCFAs), and that plays a role in the regulation of whole-body energy homeostasis and in intestinal immunity. In omnivorous mammals, the short chain fatty acids acetate, propionate and butyrate are produced primarily by the gut microbiome that metabolizes dietary fibers. SCFAs serve as a source of energy but also act as signaling molecules. That G protein-coupled receptor is probably coupled to the pertussis toxin-sensitive, G(i/o)-alpha family of G proteins but also to the Gq family. Its activation results in the formation of inositol 1,4,5-trisphosphate, the mobilization of intracellular calcium, the phosphorylation of the MAPK3/ERK1 and MAPK1/ERK2 kinases and the inhibition of intracellular cAMP accumulation. May play a role in glucose homeostasis by regulating the secretion of GLP-1, in response to short-chain fatty acids accumulating in the intestine. May also regulate the production of LEP/Leptin, a hormone acting on the central nervous system to inhibit food intake. Finally, may also regulate whole-body energy homeostasis through adipogenesis regulating both differentiation and lipid storage of adipocytes. In parallel to its role in energy homeostasis, may also mediate the activation of the inflammatory and immune responses by SCFA in the intestine, regulating the rapid production of chemokines and cytokines. May also play a role in the resolution of the inflammatory response and control chemotaxis in neutrophils. In addition to SCFAs, may also be activated by the extracellular lectin FCN1 in a process leading to activation of monocytes and inducing the secretion of interleukin-8/IL-8 in response to the presence of microbes. This chain is Free fatty acid receptor 2 (Ffar2), found in Rattus norvegicus (Rat).